The following is a 521-amino-acid chain: Cysteine protease atg-4.2 (521 aa).

Residues 90 to 100 (MMGSIRPSSSS) show a composition bias toward low complexity. Positions 90 to 109 (MMGSIRPSSSSQDVHSTGEI) are disordered. The Nucleophile role is filled by Cys-203. Residues Asp-394 and His-396 contribute to the active site. The interval 499–521 (PSYEREVSETEQAQADKHGFEML) is disordered.

This sequence belongs to the peptidase C54 family.

It is found in the cytoplasm. The enzyme catalyses [protein]-C-terminal L-amino acid-glycyl-phosphatidylethanolamide + H2O = [protein]-C-terminal L-amino acid-glycine + a 1,2-diacyl-sn-glycero-3-phosphoethanolamine. Its function is as follows. Cysteine protease required for autophagy. Cleaves the C-terminal amino acid of ATG8 family proteins lgg-1, to reveal a C-terminal glycine. Exposure of the glycine at the C-terminus is essential for ATG8 proteins conjugation to phosphatidylethanolamine (PE) and insertion to membranes, which is necessary for autophagy. Its cleavage activity is functionally redundant to atg-4.1, but it cleaves lgg-1 precursors less efficiently than atg-4.1. In contrast to atg-4.1, plays a more significant role in the later phases of autophagy and in addition has a role in autophagosome maturation. Acts redundantly with atg-4.1 to promote the lgg-1 delipidation to release the protein from membranes, which facilitates multiple events during macroautophagy. Regulates the accumulation of autophagic structures in neurons and is specifically, required for the maturation and elimination of autophagosomes from the synaptic region of AIY interneurons. The polypeptide is Cysteine protease atg-4.2 (Caenorhabditis elegans).